Consider the following 94-residue polypeptide: MSRSVKKGPYVDPKLLKKIEEMNAKNEKKVIKTWSRASTIFPQMVGHTIAVHDGRKHVPIYISEEMVGHKLGEFAPTRTFKGHGAHTEKSTALK.

The protein belongs to the universal ribosomal protein uS19 family.

In terms of biological role, protein S19 forms a complex with S13 that binds strongly to the 16S ribosomal RNA. This is Small ribosomal subunit protein uS19 from Acetivibrio thermocellus (strain ATCC 27405 / DSM 1237 / JCM 9322 / NBRC 103400 / NCIMB 10682 / NRRL B-4536 / VPI 7372) (Clostridium thermocellum).